Here is a 153-residue protein sequence, read N- to C-terminus: Putative pre-16S rRNA nuclease (153 aa).

This sequence belongs to the YqgF nuclease family.

The protein localises to the cytoplasm. In terms of biological role, could be a nuclease involved in processing of the 5'-end of pre-16S rRNA. The protein is Putative pre-16S rRNA nuclease of Chloroflexus aurantiacus (strain ATCC 29366 / DSM 635 / J-10-fl).